We begin with the raw amino-acid sequence, 1127 residues long: Disease resistance protein RPS6 (1127 aa).

An N-acetylmethionine modification is found at Met-1. The 165-residue stretch at 12-176 folds into the TIR domain; the sequence is WSYHVFPSFS…EIANDILGKM (165 aa). Glu-87 is a catalytic residue. Residues 191–452 enclose the NB-ARC domain; the sequence is EDHITKMSSL…HIACIFNGEK (262 aa). LRR repeat units follow at residues 197-221, 540-563, 587-609, 610-632, 633-656, 658-679, 680-704, 766-790, 791-813, 814-834, and 835-857; these read MSSL…GIGK, IDET…LFLK, PSRL…NFHP, ENLV…VHSL, AGLR…SMAT, LETL…IQYL, NKLN…NLKS, SPTL…IQNL, YQLE…GINL, DSLI…PDIS, and TNIS…IEKL.

In terms of assembly, interacts with EDS1. As to expression, ubiquitous.

It carries out the reaction NAD(+) + H2O = ADP-D-ribose + nicotinamide + H(+). In terms of biological role, disease resistance (R) protein that specifically recognizes the hopA1 type III effector avirulence protein from Pseudomonas syringae. Resistance proteins guard the plant against pathogens that contain an appropriate avirulence protein via an indirect interaction with this avirulence protein. That triggers a defense system including the hypersensitive response, which restricts the pathogen growth. The chain is Disease resistance protein RPS6 (RPS6) from Arabidopsis thaliana (Mouse-ear cress).